The primary structure comprises 127 residues: Insulin-like growth factor 3.L (127 aa).

A signal peptide spans 1-49 (MPVTAMCLQDSKKLKKAKLTRKKVTPFPFSRMVLCLSLVFTLYVEATNA). The interval 49–80 (ARCLRPRSKELLCGSELVDILQFICGPTGFYV) is b. 3 disulfide bridges follow: Cys61-Cys99, Cys73-Cys112, and Cys98-Cys103. The tract at residues 81–92 (SKGASFRNRNRP) is c. Residues 93-113 (GIVEECCFCGCSVAILESYCA) are a. The tract at residues 114–121 (APVTNFTG) is d. Positions 122-127 (REEQKS) are cleaved as a propeptide — e peptide.

This sequence belongs to the insulin family.

Its subcellular location is the secreted. In terms of biological role, the insulin-like growth factors, isolated from plasma, are structurally and functionally related to insulin but have a much higher growth-promoting activity. Promotes anterior neural development. This is Insulin-like growth factor 3.L from Xenopus laevis (African clawed frog).